Consider the following 647-residue polypeptide: Threonine--tRNA ligase (647 aa).

One can recognise a TGS domain in the interval 1–63 (MADISIKFPD…ASDGSIEIVT (63 aa)). Positions 242–540 (DHRVIGNQLD…LTEIYKGAFP (299 aa)) are catalytic. Residues Cys-336, His-387, and His-517 each coordinate Zn(2+).

It belongs to the class-II aminoacyl-tRNA synthetase family. Homodimer. The cofactor is Zn(2+).

The protein localises to the cytoplasm. The enzyme catalyses tRNA(Thr) + L-threonine + ATP = L-threonyl-tRNA(Thr) + AMP + diphosphate + H(+). Its function is as follows. Catalyzes the attachment of threonine to tRNA(Thr) in a two-step reaction: L-threonine is first activated by ATP to form Thr-AMP and then transferred to the acceptor end of tRNA(Thr). Also edits incorrectly charged L-seryl-tRNA(Thr). This is Threonine--tRNA ligase from Levilactobacillus brevis (strain ATCC 367 / BCRC 12310 / CIP 105137 / JCM 1170 / LMG 11437 / NCIMB 947 / NCTC 947) (Lactobacillus brevis).